A 684-amino-acid chain; its full sequence is Glycine--tRNA ligase beta subunit (684 aa).

It belongs to the class-II aminoacyl-tRNA synthetase family. Tetramer of two alpha and two beta subunits.

The protein resides in the cytoplasm. It catalyses the reaction tRNA(Gly) + glycine + ATP = glycyl-tRNA(Gly) + AMP + diphosphate. This Stutzerimonas stutzeri (strain A1501) (Pseudomonas stutzeri) protein is Glycine--tRNA ligase beta subunit.